The following is a 264-amino-acid chain: Phosphonoacetaldehyde hydrolase (264 aa).

D9 serves as the catalytic Nucleophile. The Mg(2+) site is built by D9 and A11. The active-site Schiff-base intermediate with substrate is the K50. D183 contacts Mg(2+).

It belongs to the HAD-like hydrolase superfamily. PhnX family. As to quaternary structure, homodimer. Mg(2+) serves as cofactor.

The enzyme catalyses phosphonoacetaldehyde + H2O = acetaldehyde + phosphate + H(+). Functionally, involved in phosphonate degradation. This Bacillus anthracis protein is Phosphonoacetaldehyde hydrolase.